Consider the following 227-residue polypeptide: H-N-H endonuclease F-TflIV (227 aa).

Functionally, endonuclease that introduces double-strand break into pseudo palindromic 17 bp DNA sequence yielding 1 bp extensions with 3'-overhangs. The sequence is that of H-N-H endonuclease F-TflIV from Escherichia phage T5 (Enterobacteria phage T5).